The sequence spans 505 residues: Calcium/calmodulin-dependent protein kinase kinase 1 (505 aa).

Residues 26–61 (THLEEADGGPEPTRNGVDPPPRARAASVIPGSTSRL) are disordered. Phosphoserine occurs at positions 67 and 74. R78 is modified (asymmetric dimethylarginine). A Phosphoserine modification is found at S100. T108 carries the phosphothreonine modification. The Protein kinase domain occupies 128-409 (YKLQSEIGKG…VPDIKLHPWV (282 aa)). ATP is bound by residues 134–142 (IGKGAYGVV) and K157. The segment at 167–189 (QYGFPRRPPPRGSQAAQGGPAKQ) is RP domain. D275 acts as the Proton acceptor in catalysis. The interval 435–440 (KNSVRL) is autoinhibitory domain. The interval 438–463 (VRLIPSWTTVILVKSMLRKRSFGNPF) is calmodulin-binding. S458, S475, and S492 each carry phosphoserine. The segment at 460–505 (GNPFEPQARREERSMSAPGNLLVKEGFGEGGKSPELPGVQEDEAAS) is disordered.

This sequence belongs to the protein kinase superfamily. Ser/Thr protein kinase family. In terms of assembly, interacts with CAMK4 and calmodulin. In terms of processing, appears to be autophosphorylated in a Ca(2+)/calmodulin-dependent manner. Phosphorylated at multiple sites by PRCAKA/PKA. Phosphorylation of Ser-458 is blocked upon binding to Ca(2+)/calmodulin. In vitro, phosphorylated by CAMK1 and CAMK4.

It is found in the cytoplasm. The protein localises to the nucleus. It catalyses the reaction L-seryl-[protein] + ATP = O-phospho-L-seryl-[protein] + ADP + H(+). The catalysed reaction is L-threonyl-[protein] + ATP = O-phospho-L-threonyl-[protein] + ADP + H(+). With respect to regulation, activated by Ca(2+)/calmodulin. Binding of calmodulin may relieve intrasteric autoinhibition. Partially inhibited upon phosphorylation by PRCAKA/PKA. May be regulated through phosphorylation by CAMK1 and CAMK4. Functionally, calcium/calmodulin-dependent protein kinase that belongs to a proposed calcium-triggered signaling cascade involved in a number of cellular processes. Phosphorylates CAMK1, CAMK1D, CAMK1G and CAMK4. Involved in regulating cell apoptosis. Promotes cell survival by phosphorylating AKT1/PKB that inhibits pro-apoptotic BAD/Bcl2-antagonist of cell death. In Homo sapiens (Human), this protein is Calcium/calmodulin-dependent protein kinase kinase 1 (CAMKK1).